The sequence spans 89 residues: Small ribosomal subunit protein uS15 (89 aa).

The protein belongs to the universal ribosomal protein uS15 family. In terms of assembly, part of the 30S ribosomal subunit. Forms a bridge to the 50S subunit in the 70S ribosome, contacting the 23S rRNA.

One of the primary rRNA binding proteins, it binds directly to 16S rRNA where it helps nucleate assembly of the platform of the 30S subunit by binding and bridging several RNA helices of the 16S rRNA. In terms of biological role, forms an intersubunit bridge (bridge B4) with the 23S rRNA of the 50S subunit in the ribosome. The sequence is that of Small ribosomal subunit protein uS15 from Nostoc sp. (strain PCC 7120 / SAG 25.82 / UTEX 2576).